The primary structure comprises 482 residues: Hydrogenase transcriptional regulatory protein HoxA (482 aa).

The Response regulatory domain occupies 7-121 (TVLVVDDETR…HLIDTVRQAV (115 aa)). Asp-55 is modified (4-aspartylphosphate). Positions 167-394 (APGSPLDAVC…LRNEIYRAVA (228 aa)) constitute a Sigma-54 factor interaction domain. Residues 193-200 (GESGTGKE) and 265-274 (EIGDTSPAFQ) contribute to the ATP site. The segment at residues 456–475 (KTHAAKELGLSRVGLRQKLL) is a DNA-binding region (H-T-H motif).

It localises to the cytoplasm. Its function is as follows. Probable member of the two-component regulatory system involved in the regulation of the hydrogenase activity. HoxA is probably phosphorylated by a sensory component (which could be HoxX) and then acts in conjunction with sigma-54 as a transcriptional activator. This chain is Hydrogenase transcriptional regulatory protein HoxA (hoxA), found in Cupriavidus necator (strain ATCC 17699 / DSM 428 / KCTC 22496 / NCIMB 10442 / H16 / Stanier 337) (Ralstonia eutropha).